Here is a 330-residue protein sequence, read N- to C-terminus: D-alanine--D-alanine ligase (330 aa).

The 201-residue stretch at 121–321 (NHYLKDFGVK…IKDVMTDIIE (201 aa)) folds into the ATP-grasp domain. Position 149–204 (149–204 (VTRLGLPIFVKPNDGGSSFGVTKVKEVSAIQPAIAKAFGEGREVILERFIDGTEVT)) interacts with ATP. Mg(2+) contacts are provided by Asp275, Glu288, and Asn290.

This sequence belongs to the D-alanine--D-alanine ligase family. Mg(2+) is required as a cofactor. The cofactor is Mn(2+).

The protein resides in the cytoplasm. It catalyses the reaction 2 D-alanine + ATP = D-alanyl-D-alanine + ADP + phosphate + H(+). Its pathway is cell wall biogenesis; peptidoglycan biosynthesis. Functionally, cell wall formation. The protein is D-alanine--D-alanine ligase of Parabacteroides distasonis (strain ATCC 8503 / DSM 20701 / CIP 104284 / JCM 5825 / NCTC 11152).